Consider the following 221-residue polypeptide: VQWHQIPGKLMHITATPHFLWGVNSNQQIYLCRQPCYDGQWTQISGSLKQVDADDHEVWGVNRNDDIYKRPVDGSGSWVRVSGKLKHVSASGYGYIWGVNSNDQIYKCPKPCNGAWTQVNGRLKQIDGGQSMVYGVNSANAIYRRPVDGSGSWQQISGSLKHITGSGLSEVFGVNSNDQIYRCTKPCSGQWSLIDGRLKQCDATGNTIVGVNSVDNIYRSG.

Repeat copies occupy residues 1–38 (VQWH…PCYD), 39–75 (GQWT…VDGS), 76–113 (GSWV…KPCN), 114–150 (GAWT…VDGS), 151–188 (GSWQ…KPCS), and 189–221 (GQWS…YRSG). The 6 X approximate tandem repeats stretch occupies residues 1–221 (VQWHQIPGKL…NSVDNIYRSG (221 aa)). Residues Cys32 and Cys36 are joined by a disulfide bond. The cysteines at positions 108 and 112 are disulfide-linked. Cysteines 183 and 187 form a disulfide.

The protein belongs to the tectonin family. Hemocytes.

The protein resides in the cytoplasmic vesicle. It localises to the secretory vesicle. Its function is as follows. Lipopolysaccharide-binding protein with Gram-negative antibacterial activity. Binds zinc and calcium. The chain is Lectin L6 from Tachypleus tridentatus (Japanese horseshoe crab).